The sequence spans 297 residues: Formiminotransferase cyclodeaminase-like protein (297 aa).

Positions 2–196 are formiminotransferase N-subdomain; sequence LREMLGCCKV…GVVAVGACGW (195 aa). The For formimidoyltransferase activity role is filled by H89. Folate is bound at residue 178 to 187; the sequence is GPQEVSKAKG.

The protein belongs to the formiminotransferase family. In terms of tissue distribution, expressed constitutively in roots, stems, leaves and flowers.

It localises to the golgi apparatus. Its subcellular location is the trans-Golgi network. It catalyses the reaction (6S)-5-formyl-5,6,7,8-tetrahydrofolate + L-glutamate = N-formyl-L-glutamate + (6S)-5,6,7,8-tetrahydrofolate + H(+). The enzyme catalyses 5-formimidoyltetrahydrofolate + L-glutamate = N-formimidoyl-L-glutamate + (6S)-5,6,7,8-tetrahydrofolate. The protein operates within one-carbon metabolism; tetrahydrofolate interconversion. Involved in the regulation of root growth. May regulate sorting and/or transportation of trans-Golgi network (TGN) vesicles in root cap peripheral cells, thus influencing the extracellular secretion of mucilage components in the root cap. This chain is Formiminotransferase cyclodeaminase-like protein, found in Arabidopsis thaliana (Mouse-ear cress).